The chain runs to 134 residues: Large-conductance mechanosensitive channel (134 aa).

A run of 2 helical transmembrane segments spans residues 16-36 and 81-101; these read VIDL…VTAL and GDFI…FIVV.

It belongs to the MscL family. Homopentamer.

The protein resides in the cell inner membrane. Channel that opens in response to stretch forces in the membrane lipid bilayer. May participate in the regulation of osmotic pressure changes within the cell. The protein is Large-conductance mechanosensitive channel of Stenotrophomonas maltophilia (strain K279a).